Reading from the N-terminus, the 365-residue chain is MDVVAFFTEILKFRSITPDDDGCLKFIAEFLGDFEARFIEKNGVKNLILSKRFGDGAHLAFAGHVDVVPPGEGWQSEPFTPLMKDGFIYARGAQDMKSGVAAFVCACRDAKNFNGRLTLILTSDEEGDALFGTLEALKILKERGELPQFAVVAEPTCTGVFGDTIKVGRRGSINGKILIRGVQGHVAYPEKCVNPVHQIAPLLSRIAGHDMDAGSEFFSPSKIVITDIRGGMEVCNVTPSELGIMFNVRNSDITSADDVKNYLQSVLEGLNFELSLKQSSKPFLTDKDSKIVRAMSKAVQKISGVAPQLNTKGGTSDARYLAEFGVKVVEFGVINDRIHAVDERAGVKEVERLYLVFKELIENFA.

A Zn(2+)-binding site is contributed by His-64. Residue Asp-66 is part of the active site. A Zn(2+)-binding site is contributed by Asp-95. The active-site Proton acceptor is the Glu-125. 3 residues coordinate Zn(2+): Glu-126, Glu-154, and His-339.

It belongs to the peptidase M20A family. DapE subfamily. In terms of assembly, homodimer. Requires Zn(2+) as cofactor. Co(2+) is required as a cofactor.

The enzyme catalyses N-succinyl-(2S,6S)-2,6-diaminopimelate + H2O = (2S,6S)-2,6-diaminopimelate + succinate. The protein operates within amino-acid biosynthesis; L-lysine biosynthesis via DAP pathway; LL-2,6-diaminopimelate from (S)-tetrahydrodipicolinate (succinylase route): step 3/3. In terms of biological role, catalyzes the hydrolysis of N-succinyl-L,L-diaminopimelic acid (SDAP), forming succinate and LL-2,6-diaminopimelate (DAP), an intermediate involved in the bacterial biosynthesis of lysine and meso-diaminopimelic acid, an essential component of bacterial cell walls. In Campylobacter curvus (strain 525.92), this protein is Succinyl-diaminopimelate desuccinylase.